Reading from the N-terminus, the 165-residue chain is CDP-archaeol synthase (165 aa).

3 consecutive transmembrane segments (helical) span residues 4–24 (IVQL…AVLA), 78–98 (LLDA…GAFV), and 118–138 (FLLM…PLLL).

It belongs to the CDP-archaeol synthase family. The cofactor is Mg(2+).

Its subcellular location is the cell membrane. It catalyses the reaction 2,3-bis-O-(geranylgeranyl)-sn-glycerol 1-phosphate + CTP + H(+) = CDP-2,3-bis-O-(geranylgeranyl)-sn-glycerol + diphosphate. The protein operates within membrane lipid metabolism; glycerophospholipid metabolism. Functionally, catalyzes the formation of CDP-2,3-bis-(O-geranylgeranyl)-sn-glycerol (CDP-archaeol) from 2,3-bis-(O-geranylgeranyl)-sn-glycerol 1-phosphate (DGGGP) and CTP. This reaction is the third ether-bond-formation step in the biosynthesis of archaeal membrane lipids. The protein is CDP-archaeol synthase of Pyrobaculum calidifontis (strain DSM 21063 / JCM 11548 / VA1).